The chain runs to 426 residues: Histidine--tRNA ligase (426 aa).

It belongs to the class-II aminoacyl-tRNA synthetase family.

The protein resides in the cytoplasm. The catalysed reaction is tRNA(His) + L-histidine + ATP = L-histidyl-tRNA(His) + AMP + diphosphate + H(+). The chain is Histidine--tRNA ligase from Saccharolobus islandicus (strain Y.N.15.51 / Yellowstone #2) (Sulfolobus islandicus).